The following is a 959-amino-acid chain: ATP-dependent 6-phosphofructokinase subunit beta (959 aa).

Residues 2–573 form an N-terminal catalytic PFK domain 1 region; sequence TVTTPFVNGT…HLNNFMAINS (572 aa). Residues 144 to 167 form a disordered region; it reads KNAVSTKPTPPPAPEASAESGLSS. Position 152 is a phosphothreonine (T152). Positions 158-167 are enriched in low complexity; the sequence is EASAESGLSS. Residues S163 and S171 each carry the phosphoserine modification. Residues G206, 270-271, and 300-303 each bind ATP; these read RC and GDGS. D301 contributes to the Mg(2+) binding site. Residues 346-348, R383, 390-392, E447, R475, and 481-484 contribute to the beta-D-fructose 6-phosphate site; these read SID, MGR, and HVQR. Catalysis depends on D348, which acts as the Proton acceptor. The interdomain linker stretch occupies residues 574–587; that stretch reads ADHNEPKLPKDKRL. The tract at residues 588–959 is C-terminal regulatory PFK domain 2; it reads KIAIVNVGAP…DHLVGRKRVD (372 aa). Beta-D-fructose 2,6-bisphosphate-binding positions include R658, 716 to 720, R754, and 761 to 763; these read TLSNN and QGG. S803 is subject to Phosphoserine. Residues K847, 853–856, and R935 contribute to the beta-D-fructose 2,6-bisphosphate site; that span reads HVQQ.

It belongs to the phosphofructokinase type A (PFKA) family. ATP-dependent PFK group I subfamily. Eukaryotic two domain clade 'E' sub-subfamily. In terms of assembly, heterooctamer of 4 alpha and 4 beta chains. It depends on Mg(2+) as a cofactor.

The protein localises to the cytoplasm. It localises to the mitochondrion outer membrane. It carries out the reaction beta-D-fructose 6-phosphate + ATP = beta-D-fructose 1,6-bisphosphate + ADP + H(+). Its pathway is carbohydrate degradation; glycolysis; D-glyceraldehyde 3-phosphate and glycerone phosphate from D-glucose: step 3/4. Allosterically activated by ADP, AMP, or fructose 2,6-bisphosphate, and allosterically inhibited by ATP or citrate. In terms of biological role, catalyzes the phosphorylation of D-fructose 6-phosphate to fructose 1,6-bisphosphate by ATP, the first committing step of glycolysis. The protein is ATP-dependent 6-phosphofructokinase subunit beta (PFK2) of Saccharomyces cerevisiae (strain ATCC 204508 / S288c) (Baker's yeast).